Reading from the N-terminus, the 154-residue chain is NADPH-dependent 7-cyano-7-deazaguanine reductase (154 aa).

Residues 1–21 (MPNTDVSSLSMLGQQTETAQS) show a composition bias toward polar residues. Residues 1 to 28 (MPNTDVSSLSMLGQQTETAQSPEEAVLE) are disordered. The active-site Thioimide intermediate is cysteine 52. The active-site Proton donor is the aspartate 59. Residues 74-76 (VES) and 93-94 (HE) contribute to the substrate site.

It belongs to the GTP cyclohydrolase I family. QueF type 1 subfamily.

The protein resides in the cytoplasm. The enzyme catalyses 7-aminomethyl-7-carbaguanine + 2 NADP(+) = 7-cyano-7-deazaguanine + 2 NADPH + 3 H(+). It functions in the pathway tRNA modification; tRNA-queuosine biosynthesis. Its function is as follows. Catalyzes the NADPH-dependent reduction of 7-cyano-7-deazaguanine (preQ0) to 7-aminomethyl-7-deazaguanine (preQ1). This is NADPH-dependent 7-cyano-7-deazaguanine reductase from Rhizobium johnstonii (strain DSM 114642 / LMG 32736 / 3841) (Rhizobium leguminosarum bv. viciae).